A 218-amino-acid polypeptide reads, in one-letter code: Glutathione S-transferase Mu 4 (218 aa).

The 88-residue stretch at 1-88 folds into the GST N-terminal domain; the sequence is MPMTLGYWDI…YIARKHNLCG (88 aa). Residues 7 to 8, 46 to 50, 59 to 60, and 72 to 73 contribute to the glutathione site; these read YW, WLSEK, NL, and QS. Residues 90–208 enclose the GST C-terminal domain; it reads TEEEKIRVDI…KTSRFLRTPL (119 aa). Tyr116 is a substrate binding site.

Belongs to the GST superfamily. Mu family. Homodimer.

The protein resides in the cytoplasm. The catalysed reaction is RX + glutathione = an S-substituted glutathione + a halide anion + H(+). The enzyme catalyses 1-chloro-2,4-dinitrobenzene + glutathione = 2,4-dinitrophenyl-S-glutathione + chloride + H(+). It carries out the reaction (13S,14S)-epoxy-(4Z,7Z,9E,11E,16Z,19Z)-docosahexaenoate + glutathione = (13R)-S-glutathionyl-(14S)-hydroxy-(4Z,7Z,9E,11E,16Z,19Z)-docosahexaenoate. It catalyses the reaction leukotriene C4 = leukotriene A4 + glutathione. Conjugation of reduced glutathione to a wide number of exogenous and endogenous hydrophobic electrophiles. Catalyzes the conjugation of leukotriene A4 with reduced glutathione (GSH) to form leukotriene C4. Can also catalyze the transfer of a glutathionyl group from glutathione (GSH) to 13(S),14(S)-epoxy-docosahexaenoic acid to form maresin conjugate in tissue regeneration 1 (MCTR1), a bioactive lipid mediator that possess potent anti-inflammatory and proresolving actions. The chain is Glutathione S-transferase Mu 4 (Gstm4) from Rattus norvegicus (Rat).